We begin with the raw amino-acid sequence, 211 residues long: Ribonuclease HII (211 aa).

In terms of domain architecture, RNase H type-2 spans 17–211; it reads FLSAGVDEVG…CQPSLFEVRS (195 aa). Residues Asp23, Glu24, and Asp119 each coordinate a divalent metal cation.

Belongs to the RNase HII family. Mn(2+) is required as a cofactor. Mg(2+) serves as cofactor.

The protein resides in the cytoplasm. It carries out the reaction Endonucleolytic cleavage to 5'-phosphomonoester.. In terms of biological role, endonuclease that specifically degrades the RNA of RNA-DNA hybrids. The protein is Ribonuclease HII of Trichodesmium erythraeum (strain IMS101).